The primary structure comprises 202 residues: Imidazoleglycerol-phosphate dehydratase (202 aa).

It belongs to the imidazoleglycerol-phosphate dehydratase family.

It is found in the cytoplasm. The enzyme catalyses D-erythro-1-(imidazol-4-yl)glycerol 3-phosphate = 3-(imidazol-4-yl)-2-oxopropyl phosphate + H2O. It participates in amino-acid biosynthesis; L-histidine biosynthesis; L-histidine from 5-phospho-alpha-D-ribose 1-diphosphate: step 6/9. The chain is Imidazoleglycerol-phosphate dehydratase from Rhodopirellula baltica (strain DSM 10527 / NCIMB 13988 / SH1).